We begin with the raw amino-acid sequence, 525 residues long: GMP synthase [glutamine-hydrolyzing] (525 aa).

Positions Arg-9–Leu-207 constitute a Glutamine amidotransferase type-1 domain. The active-site Nucleophile is Cys-86. Active-site residues include His-181 and Glu-183. Positions Trp-208–Arg-400 constitute a GMPS ATP-PPase domain. Ser-235–Ser-241 lines the ATP pocket.

Homodimer.

The catalysed reaction is XMP + L-glutamine + ATP + H2O = GMP + L-glutamate + AMP + diphosphate + 2 H(+). It participates in purine metabolism; GMP biosynthesis; GMP from XMP (L-Gln route): step 1/1. Catalyzes the synthesis of GMP from XMP. In Marinobacter nauticus (strain ATCC 700491 / DSM 11845 / VT8) (Marinobacter aquaeolei), this protein is GMP synthase [glutamine-hydrolyzing].